Here is a 201-residue protein sequence, read N- to C-terminus: Transcription factor MYB82 (201 aa).

HTH myb-type domains follow at residues 9–61 (KSYV…KNYL) and 62–116 (RPNI…NKKP). 2 consecutive DNA-binding regions (H-T-H motif) follow at residues 37–61 (WADI…KNYL) and 89–112 (WSLI…NTHL). Positions 112–133 (LNKKPNSRRQNAPESIVGATPF) are disordered.

As to quaternary structure, homodimer and heterodimer with GL1. Part of the WD40-bHLH-MYB complex. Interacts with BHLH012/MYC1 and BHLH042/TT8. Interacts (via N-terminus) with GL1 and GL3. In terms of tissue distribution, mainly expressed in the trichomes of new leaves.

Its subcellular location is the nucleus. In terms of biological role, transcription activation factor positively regulating trichomes development. Has a function nearly equivalent to that of GL1 and can complement gl1 mutants. This Arabidopsis thaliana (Mouse-ear cress) protein is Transcription factor MYB82 (MYB82).